A 304-amino-acid polypeptide reads, in one-letter code: Protein pxr1 (304 aa).

Basic residues predominate over residues 1–11 (MGLAAPRKKTK). Disordered stretches follow at residues 1–25 (MGLAAPRKKTKISHDPNNTSWSRST), 144–238 (NATA…DTET), and 256–276 (TSLLASNGPSTSRERQPMGRR). Polar residues predominate over residues 15 to 25 (DPNNTSWSRST). The 55-residue stretch at 25 to 79 (TDGFGHRILKAQGWTPGDFLGARNATHSDLFTTASASHIRVVLKDDTLGLGARPK) folds into the G-patch domain. 2 stretches are compositionally biased toward basic and acidic residues: residues 154 to 170 (LRVDFPRETSSNEHENG) and 204 to 238 (GKEMDMSPRKSREKKQEKIQKKRKIGDCDRLDTET). Residues 256-266 (TSLLASNGPST) are compositionally biased toward polar residues.

The protein belongs to the PINX1 family.

It localises to the nucleus. The protein resides in the nucleolus. In terms of biological role, involved in rRNA-processing at A0, A1 and A2 sites and negatively regulates telomerase. The polypeptide is Protein pxr1 (pxr1) (Aspergillus fumigatus (strain ATCC MYA-4609 / CBS 101355 / FGSC A1100 / Af293) (Neosartorya fumigata)).